A 256-amino-acid polypeptide reads, in one-letter code: Pro-thyrotropin-releasing hormone (256 aa).

The N-terminal stretch at 1–24 (MQGPWLMMALALIFVLTGIPKSCA) is a signal peptide. Disordered regions lie at residues 76–128 (RQHP…EGDS) and 151–215 (VKRQ…HPCG). 4 positions are modified to proline amide: P79, P111, P156, and P174. Residues 104 to 113 (RPHKRQHPGR) are compositionally biased toward basic residues. The span at 177–188 (RFIDPELQRSWE) shows a compositional bias: basic and acidic residues. P205 is modified (proline amide).

The protein belongs to the TRH family. In terms of tissue distribution, specifically expressed in hypothalamus and testis.

It localises to the secreted. In terms of biological role, functions as a regulator of the biosynthesis of TSH in the anterior pituitary gland and as a neurotransmitter/ neuromodulator in the central and peripheral nervous systems. This chain is Pro-thyrotropin-releasing hormone (Trh), found in Mus musculus (Mouse).